The sequence spans 355 residues: Peptide chain release factor 1 (355 aa).

Q231 is modified (N5-methylglutamine).

This sequence belongs to the prokaryotic/mitochondrial release factor family. Methylated by PrmC. Methylation increases the termination efficiency of RF1.

The protein resides in the cytoplasm. Functionally, peptide chain release factor 1 directs the termination of translation in response to the peptide chain termination codons UAG and UAA. This chain is Peptide chain release factor 1, found in Aliarcobacter butzleri (strain RM4018) (Arcobacter butzleri).